Reading from the N-terminus, the 702-residue chain is Ribosomal RNA large subunit methyltransferase K/L (702 aa).

A THUMP domain is found at 43 to 154; it reads LVYQSLMWSR…KETASIALDL (112 aa).

Belongs to the methyltransferase superfamily. RlmKL family.

It is found in the cytoplasm. It catalyses the reaction guanosine(2445) in 23S rRNA + S-adenosyl-L-methionine = N(2)-methylguanosine(2445) in 23S rRNA + S-adenosyl-L-homocysteine + H(+). The enzyme catalyses guanosine(2069) in 23S rRNA + S-adenosyl-L-methionine = N(2)-methylguanosine(2069) in 23S rRNA + S-adenosyl-L-homocysteine + H(+). Specifically methylates the guanine in position 2445 (m2G2445) and the guanine in position 2069 (m7G2069) of 23S rRNA. This chain is Ribosomal RNA large subunit methyltransferase K/L, found in Shigella flexneri serotype 5b (strain 8401).